Consider the following 235-residue polypeptide: Large ribosomal subunit protein uL3 (235 aa).

A disordered region spans residues 150 to 189 (AGGPASHGSGHHRHAGSTGMRSTPGRGLPGGKKAGQMGNE).

Belongs to the universal ribosomal protein uL3 family. As to quaternary structure, part of the 50S ribosomal subunit. Forms a cluster with proteins L14 and L19.

Its function is as follows. One of the primary rRNA binding proteins, it binds directly near the 3'-end of the 23S rRNA, where it nucleates assembly of the 50S subunit. This is Large ribosomal subunit protein uL3 from Protochlamydia amoebophila (strain UWE25).